Consider the following 639-residue polypeptide: Extracellular metalloproteinase 9 (639 aa).

Positions 1 to 19 (MHGLLLAAGLLSLPLRALG) are cleaved as a signal peptide. The propeptide occupies 20-250 (HPNPNPQMHT…IHGVVDYVAD (231 aa)). Asn-278 carries N-linked (GlcNAc...) asparagine glycosylation. The interval 293–312 (PTTRGNNGIAQDNPSGGNQY) is disordered. Position 434 (His-434) interacts with Zn(2+). The active site involves Glu-435. His-438 provides a ligand contact to Zn(2+).

This sequence belongs to the peptidase M36 family. Requires Zn(2+) as cofactor.

The protein localises to the secreted. Secreted metalloproteinase that allows assimilation of proteinaceous substrates and probably acts as a virulence factor. The polypeptide is Extracellular metalloproteinase 9 (MEP9) (Coccidioides posadasii (strain C735) (Valley fever fungus)).